A 32-amino-acid polypeptide reads, in one-letter code: Phallacidin proprotein (32 aa).

Positions 1–10 are excised as a propeptide; sequence MSDINATRLP. Residues 11–17 constitute a cross-link (cyclopeptide (Ala-Pro)); sequence AWLVDCP. Positions 12–16 form a cross-link, 2'-cysteinyl-6'-hydroxytryptophan sulfoxide (Trp-Cys); it reads WLVDC. Residues 18-32 constitute a propeptide that is removed on maturation; it reads CVGDDINRLLTRGEK.

This sequence belongs to the MSDIN fungal toxin family. Post-translationally, processed by the macrocyclase-peptidase enzyme POPB to yield a toxic cyclic heptapeptide. POPB first removes 10 residues from the N-terminus. Conformational trapping of the remaining peptide forces the enzyme to release this intermediate rather than proceed to macrocyclization. The enzyme rebinds the remaining peptide in a different conformation and catalyzes macrocyclization of the N-terminal 7 residues.

Its function is as follows. Major toxin that belongs to the bicyclic heptapeptides called phallotoxins. Although structurally related to amatoxins, phallotoxins have a different mode of action, which is the stabilization of F-actin. Phallotoxins are poisonous when administered parenterally, but not orally because of poor absorption. In Amanita pallidorosea, this protein is Phallacidin proprotein.